Reading from the N-terminus, the 606-residue chain is NADH-ubiquinone oxidoreductase chain 5 (606 aa).

M1 carries the post-translational modification N-formylmethionine. 15 helical membrane-spanning segments follow: residues F4–F24, A43–I63, M87–Y107, F117–L137, L140–G160, A171–T191, L213–L233, T241–I261, I273–L293, L310–C330, M366–L386, L413–G433, L457–I477, M482–L502, and G582–F602.

In terms of assembly, core subunit of respiratory chain NADH dehydrogenase (Complex I) which is composed of 45 different subunits.

Its subcellular location is the mitochondrion inner membrane. The catalysed reaction is a ubiquinone + NADH + 5 H(+)(in) = a ubiquinol + NAD(+) + 4 H(+)(out). Functionally, core subunit of the mitochondrial membrane respiratory chain NADH dehydrogenase (Complex I) which catalyzes electron transfer from NADH through the respiratory chain, using ubiquinone as an electron acceptor. Essential for the catalytic activity and assembly of complex I. The protein is NADH-ubiquinone oxidoreductase chain 5 (MT-ND5) of Bos taurus (Bovine).